The primary structure comprises 1211 residues: Diacylglycerol kinase 1 (1211 aa).

The segment at 174–244 (HHSLGGHLSH…RNSSKKSSNS (71 aa)) is disordered. Positions 197 to 230 (VTPSPLASGPSMFQASNPARRSVDSSPSHSATNH) are enriched in polar residues. Over residues 231-244 (SQMSRNSSKKSSNS) the composition is skewed to low complexity. 2 consecutive EF-hand domains span residues 286 to 321 (RPED…MMAV) and 331 to 366 (ELRP…TIPL). Aspartate 299, aspartate 301, asparagine 303, glutamate 310, aspartate 344, aspartate 346, aspartate 348, threonine 350, and glutamate 355 together coordinate Ca(2+). 2 consecutive Phorbol-ester/DAG-type zinc fingers follow at residues 382–432 (IHVW…PASC) and 449–498 (LHHW…KKEC). The region spanning 548-682 (ELSCPLLVFV…LDRWSIEVTN (135 aa)) is the DAGKc domain. Disordered regions lie at residues 789–841 (TLRT…ETEK), 874–893 (AATA…QRNK), and 910–958 (DHED…QQQQ). Residues 795–805 (SSSSSNTSSGS) show a composition bias toward low complexity. Residues 826 to 841 (DVREKSVPRRSGETEK) show a composition bias toward basic and acidic residues. Positions 879–893 (PVGSNQSDNSSQRNK) are enriched in polar residues. Residues 931-958 (NSIPATPATPITPTTPNAASSVLQQQQQ) show a composition bias toward low complexity.

It belongs to the eukaryotic diacylglycerol kinase family. In terms of tissue distribution, in 10-11 hours embryos, expression is abundant in a limited number of cells in the procephalic region and in the ventral nerve cord. Predominantly expressed in the adult nervous system and muscle: including compound eyes, brain cortex, fibrillar muscle, and tubular muscle.

It carries out the reaction a 1,2-diacyl-sn-glycerol + ATP = a 1,2-diacyl-sn-glycero-3-phosphate + ADP + H(+). Its function is as follows. Upon cell stimulation converts the second messenger diacylglycerol into phosphatidate, initiating the resynthesis of phosphatidylinositols and attenuating protein kinase C activity. May have a role in the development of the embryonic nervous system and the function of the adult nervous system and muscle; regulating signal transduction in neurons. The protein is Diacylglycerol kinase 1 (Dgk) of Drosophila melanogaster (Fruit fly).